The sequence spans 308 residues: Taste receptor type 2 member 107 (308 aa).

The Extracellular segment spans residues 1 to 7 (MLSAAEG). The helical transmembrane segment at 8-28 (ILLCVVTSEAVLGVLGDTFIA) threads the bilayer. The Cytoplasmic segment spans residues 29 to 43 (LANCMEYAKNKKLSK). The chain crosses the membrane as a helical span at residues 44–64 (IGFILIGLAISRIGVVWIIIL). The Extracellular portion of the chain corresponds to 65–94 (QGYMQVFFPHILTFGNITEYITYIWVFLNH). A glycan (N-linked (GlcNAc...) asparagine) is linked at Asn-80. Residues 95-115 (LSVWFATNLNILYFLKIANFS) form a helical membrane-spanning segment. Over 116–127 (NSVFLWLKSRVR) the chain is Cytoplasmic. A helical transmembrane segment spans residues 128 to 148 (VVFIFLSGCLLTSWLLCFPQF). Topologically, residues 149-180 (SKMLNNSKMYWGNTSWLQQQKNVFLINQSLTN) are extracellular. N-linked (GlcNAc...) asparagine glycans are attached at residues Asn-153, Asn-161, and Asn-175. A helical membrane pass occupies residues 181-201 (LGIFFFIIVSLITCFLLIVFL). At 202-232 (WRHIRQMHSDGSGLRDLNTEAHVKAMRVLIS) the chain is on the cytoplasmic side. The chain crosses the membrane as a helical span at residues 233–253 (FAVLFILHFVGLSIQVLCFFL). The Extracellular portion of the chain corresponds to 254–258 (PQNNL). A helical transmembrane segment spans residues 259–279 (LFITGLIATCLYPCGHSIILI). Residues 280-308 (LGNKQLKQASLKALQHLTCCETKRNLSVT) are Cytoplasmic-facing.

It belongs to the G-protein coupled receptor T2R family.

The protein resides in the membrane. Putative taste receptor which may play a role in the perception of bitterness. This is Taste receptor type 2 member 107 from Rattus norvegicus (Rat).